We begin with the raw amino-acid sequence, 552 residues long: Probable protein kinase UbiB (552 aa).

The 384-residue stretch at 121 to 504 (HFDTVPLASA…QGLQRRVVNA (384 aa)) folds into the Protein kinase domain. ATP is bound by residues 127-135 (LASASISQV) and Lys-149. Asp-284 functions as the Proton acceptor in the catalytic mechanism. 2 helical membrane-spanning segments follow: residues 501–521 (VVNA…YGLH) and 530–550 (IPVW…SAWW).

Belongs to the ABC1 family. UbiB subfamily.

The protein resides in the cell inner membrane. It functions in the pathway cofactor biosynthesis; ubiquinone biosynthesis [regulation]. Its function is as follows. Is probably a protein kinase regulator of UbiI activity which is involved in aerobic coenzyme Q (ubiquinone) biosynthesis. In Xylella fastidiosa (strain M12), this protein is Probable protein kinase UbiB.